The chain runs to 264 residues: MSLSKVSVENSLKPEKFVKISWVDKLLPNYFSILKYLSITDFSVVKAQSYESLVPVKLLRGVDLTKHLYVTLLGVVVSGVWNVPESCRGGATVALVDTRMHSVAEGTICKFSAPATVREFSVRFIPNYPVVAADALRDPWSLFVRLSNVGIKDGFHPLTLEVACLVATTNSIIKKGLRASVVESVVSSDQSIVLDSLSEKVEPFFDKVPISAAVMARDPSYRSRSQSVGGRGKRHSKPPNRRLDSASEESSSVSFEDGLQSDHT.

Positions 219–264 (PSYRSRSQSVGGRGKRHSKPPNRRLDSASEESSSVSFEDGLQSDHT) are disordered. The span at 231 to 240 (RGKRHSKPPN) shows a compositional bias: basic residues.

This sequence belongs to the tobamovirus movement protein family.

Its subcellular location is the host cytoplasm. It localises to the host cytoskeleton. The protein resides in the host cell junction. It is found in the host plasmodesma. Transports viral genome to neighboring plant cells directly through plasmosdesmata, without any budding. The movement protein allows efficient cell to cell propagation, by bypassing the host cell wall barrier. Forms a ribonucleoprotein complex with viral RNA. Binds microtubules and modulates microtubule stability. Can bind double-stranded DNA. This is Movement protein (MP) from Cucumber green mottle mosaic virus (strain watermelon SH) (CGMMV).